A 214-amino-acid polypeptide reads, in one-letter code: Pyridoxine/pyridoxamine 5'-phosphate oxidase (214 aa).

Substrate contacts are provided by residues 8-11 (RINY) and lysine 66. Residues 61–66 (RIVLIK), 76–77 (FT), arginine 82, lysine 83, and glutamine 105 contribute to the FMN site. Residues tyrosine 123, arginine 127, and serine 131 each coordinate substrate. FMN is bound by residues 140 to 141 (QS) and tryptophan 184. Substrate is bound at residue 190–192 (RLH). Arginine 194 contacts FMN.

This sequence belongs to the pyridoxamine 5'-phosphate oxidase family. As to quaternary structure, homodimer. FMN is required as a cofactor.

It catalyses the reaction pyridoxamine 5'-phosphate + O2 + H2O = pyridoxal 5'-phosphate + H2O2 + NH4(+). It carries out the reaction pyridoxine 5'-phosphate + O2 = pyridoxal 5'-phosphate + H2O2. It functions in the pathway cofactor metabolism; pyridoxal 5'-phosphate salvage; pyridoxal 5'-phosphate from pyridoxamine 5'-phosphate: step 1/1. The protein operates within cofactor metabolism; pyridoxal 5'-phosphate salvage; pyridoxal 5'-phosphate from pyridoxine 5'-phosphate: step 1/1. Functionally, catalyzes the oxidation of either pyridoxine 5'-phosphate (PNP) or pyridoxamine 5'-phosphate (PMP) into pyridoxal 5'-phosphate (PLP). The polypeptide is Pyridoxine/pyridoxamine 5'-phosphate oxidase (Burkholderia ambifaria (strain ATCC BAA-244 / DSM 16087 / CCUG 44356 / LMG 19182 / AMMD) (Burkholderia cepacia (strain AMMD))).